The sequence spans 207 residues: Holliday junction branch migration complex subunit RuvA (207 aa).

A domain I region spans residues 1–68; it reads MIGYLQGSLA…EDQWLLFGFL (68 aa). Residues 69 to 147 form a domain II region; it reads QMAERDLFRQ…EWREEAGLLP (79 aa). The interval 148-158 is flexible linker; the sequence is SATAAPIAAVQ. Residues 158-207 are domain III; that stretch reads QEDVEMTLLALGYNNREILQALTAIAQENLVQSGQPAEDWIREAIAWLSR.

It belongs to the RuvA family. As to quaternary structure, homotetramer. Forms an RuvA(8)-RuvB(12)-Holliday junction (HJ) complex. HJ DNA is sandwiched between 2 RuvA tetramers; dsDNA enters through RuvA and exits via RuvB. An RuvB hexamer assembles on each DNA strand where it exits the tetramer. Each RuvB hexamer is contacted by two RuvA subunits (via domain III) on 2 adjacent RuvB subunits; this complex drives branch migration. In the full resolvosome a probable DNA-RuvA(4)-RuvB(12)-RuvC(2) complex forms which resolves the HJ.

The protein localises to the cytoplasm. In terms of biological role, the RuvA-RuvB-RuvC complex processes Holliday junction (HJ) DNA during genetic recombination and DNA repair, while the RuvA-RuvB complex plays an important role in the rescue of blocked DNA replication forks via replication fork reversal (RFR). RuvA specifically binds to HJ cruciform DNA, conferring on it an open structure. The RuvB hexamer acts as an ATP-dependent pump, pulling dsDNA into and through the RuvAB complex. HJ branch migration allows RuvC to scan DNA until it finds its consensus sequence, where it cleaves and resolves the cruciform DNA. This chain is Holliday junction branch migration complex subunit RuvA, found in Synechococcus elongatus (strain ATCC 33912 / PCC 7942 / FACHB-805) (Anacystis nidulans R2).